Here is a 652-residue protein sequence, read N- to C-terminus: tRNA 5-methylaminomethyl-2-thiouridine biosynthesis bifunctional protein MnmC (652 aa).

Positions 1–227 (MLSWKNDLTP…KREMLTGKYS (227 aa)) are tRNA (mnm(5)s(2)U34)-methyltransferase. The segment at 259 to 652 (IGAGIAGSTL…ARFLYRRIRK (394 aa)) is FAD-dependent cmnm(5)s(2)U34 oxidoreductase.

In the N-terminal section; belongs to the methyltransferase superfamily. tRNA (mnm(5)s(2)U34)-methyltransferase family. This sequence in the C-terminal section; belongs to the DAO family. FAD serves as cofactor.

It localises to the cytoplasm. The enzyme catalyses 5-aminomethyl-2-thiouridine(34) in tRNA + S-adenosyl-L-methionine = 5-methylaminomethyl-2-thiouridine(34) in tRNA + S-adenosyl-L-homocysteine + H(+). Functionally, catalyzes the last two steps in the biosynthesis of 5-methylaminomethyl-2-thiouridine (mnm(5)s(2)U) at the wobble position (U34) in tRNA. Catalyzes the FAD-dependent demodification of cmnm(5)s(2)U34 to nm(5)s(2)U34, followed by the transfer of a methyl group from S-adenosyl-L-methionine to nm(5)s(2)U34, to form mnm(5)s(2)U34. This Leptospira borgpetersenii serovar Hardjo-bovis (strain JB197) protein is tRNA 5-methylaminomethyl-2-thiouridine biosynthesis bifunctional protein MnmC.